Reading from the N-terminus, the 367-residue chain is Protein-glutamate methylesterase/protein-glutamine glutaminase 2 (367 aa).

The region spanning 15 to 132 (RALIVDDSAL…SQSMHEMAEE (118 aa)) is the Response regulatory domain. A 4-aspartylphosphate modification is found at aspartate 66. In terms of domain architecture, CheB-type methylesterase spans 172 to 367 (KTSVRNVLAI…MADEIVKIVR (196 aa)). Active-site residues include serine 184, histidine 211, and aspartate 311.

Belongs to the CheB family. Post-translationally, phosphorylated by CheA. Phosphorylation of the N-terminal regulatory domain activates the methylesterase activity.

It is found in the cytoplasm. The enzyme catalyses [protein]-L-glutamate 5-O-methyl ester + H2O = L-glutamyl-[protein] + methanol + H(+). The catalysed reaction is L-glutaminyl-[protein] + H2O = L-glutamyl-[protein] + NH4(+). Its function is as follows. Involved in chemotaxis. Part of a chemotaxis signal transduction system that modulates chemotaxis in response to various stimuli. Catalyzes the demethylation of specific methylglutamate residues introduced into the chemoreceptors (methyl-accepting chemotaxis proteins or MCP) by CheR. Also mediates the irreversible deamidation of specific glutamine residues to glutamic acid. This Methanosarcina mazei (strain ATCC BAA-159 / DSM 3647 / Goe1 / Go1 / JCM 11833 / OCM 88) (Methanosarcina frisia) protein is Protein-glutamate methylesterase/protein-glutamine glutaminase 2.